The chain runs to 416 residues: MIKLTRRQIIRRTAGTLFALSPIASAVAKTVRAPQFTAARIWPSHTYTRLTLESTAALKYQHFTLDNPGRLVVDIQNANINTVLHGLSQKVMADDPFIRSIRAGQNTPTTVRLVIDLKQPTHAQVFALPPVGGFKNRLVVDLYPHGMDADDPMMALLNGSLNKTLRGSPEADLAQNTTPQPGRGRNGRRPVIMLDPGHGGEDPGAISPGGLQEKHVVLSIARETKNQLEALGYNVFMTRNEDVFIPLGVRVAKGRARRADVFVSIHADAFTSPSARGTGVYMLNTKGATSSAAKFLEQTQNNADAVGGVPTSGNRNVDTALLDMTQTATLRDSRKLGKLVLEELGRLNHLHKGRVDEANFAVLRAPDMPSILVETAFLSNPAEEKLLGSESFRRQCAQSIASGVQRYINTSVLKRG.

The N-terminal stretch at M1–A26 is a signal peptide. Positions R166–V191 are disordered. The MurNAc-LAA domain maps to I192–Q405.

It belongs to the N-acetylmuramoyl-L-alanine amidase 3 family.

The protein localises to the periplasm. The enzyme catalyses Hydrolyzes the link between N-acetylmuramoyl residues and L-amino acid residues in certain cell-wall glycopeptides.. Cell-wall hydrolase involved in septum cleavage during cell division. This chain is N-acetylmuramoyl-L-alanine amidase AmiC (amiC), found in Neisseria meningitidis serogroup B (strain ATCC BAA-335 / MC58).